The primary structure comprises 434 residues: Methylenetetrahydrofolate--tRNA-(uracil-5-)-methyltransferase TrmFO (434 aa).

9 to 14 (GAGLAG) is a binding site for FAD.

This sequence belongs to the MnmG family. TrmFO subfamily. The cofactor is FAD.

The protein localises to the cytoplasm. The enzyme catalyses uridine(54) in tRNA + (6R)-5,10-methylene-5,6,7,8-tetrahydrofolate + NADH + H(+) = 5-methyluridine(54) in tRNA + (6S)-5,6,7,8-tetrahydrofolate + NAD(+). It carries out the reaction uridine(54) in tRNA + (6R)-5,10-methylene-5,6,7,8-tetrahydrofolate + NADPH + H(+) = 5-methyluridine(54) in tRNA + (6S)-5,6,7,8-tetrahydrofolate + NADP(+). Functionally, catalyzes the folate-dependent formation of 5-methyl-uridine at position 54 (M-5-U54) in all tRNAs. The chain is Methylenetetrahydrofolate--tRNA-(uracil-5-)-methyltransferase TrmFO from Fusobacterium nucleatum subsp. nucleatum (strain ATCC 25586 / DSM 15643 / BCRC 10681 / CIP 101130 / JCM 8532 / KCTC 2640 / LMG 13131 / VPI 4355).